Here is a 292-residue protein sequence, read N- to C-terminus: Zinc metalloproteinase nas-3 (292 aa).

The N-terminal stretch at 1–16 (MYRFIIFFSLLALTAS) is a signal peptide. A Peptidase M12A domain is found at 56 to 249 (RGIAIHPWQW…RNINTLYKCN (194 aa)). 2 disulfide bridges follow: Cys-103–Cys-248 and Cys-128–Cys-158. Zn(2+) is bound at residue His-169. Glu-170 is a catalytic residue. His-173 and His-179 together coordinate Zn(2+).

The cofactor is Zn(2+).

Its subcellular location is the secreted. Its function is as follows. Metalloprotease. This chain is Zinc metalloproteinase nas-3 (nas-3), found in Caenorhabditis elegans.